A 171-amino-acid polypeptide reads, in one-letter code: Adenine phosphoribosyltransferase (171 aa).

Belongs to the purine/pyrimidine phosphoribosyltransferase family. Homodimer.

It localises to the cytoplasm. It carries out the reaction AMP + diphosphate = 5-phospho-alpha-D-ribose 1-diphosphate + adenine. Its pathway is purine metabolism; AMP biosynthesis via salvage pathway; AMP from adenine: step 1/1. In terms of biological role, catalyzes a salvage reaction resulting in the formation of AMP, that is energically less costly than de novo synthesis. In Acetivibrio thermocellus (strain ATCC 27405 / DSM 1237 / JCM 9322 / NBRC 103400 / NCIMB 10682 / NRRL B-4536 / VPI 7372) (Clostridium thermocellum), this protein is Adenine phosphoribosyltransferase.